Reading from the N-terminus, the 299-residue chain is tRNA pseudouridine synthase B (299 aa).

The active-site Nucleophile is the D49. A PUA domain is found at 241-299; that stretch reads MPRVTVSGRAAARVLHGVAPAVRVEHPDGTTVAVVAANGALLALAEADGGGLRLRKVFG.

This sequence belongs to the pseudouridine synthase TruB family. Type 1 subfamily.

The enzyme catalyses uridine(55) in tRNA = pseudouridine(55) in tRNA. In terms of biological role, responsible for synthesis of pseudouridine from uracil-55 in the psi GC loop of transfer RNAs. The protein is tRNA pseudouridine synthase B of Symbiobacterium thermophilum (strain DSM 24528 / JCM 14929 / IAM 14863 / T).